Here is a 271-residue protein sequence, read N- to C-terminus: Phosphonoacetaldehyde hydrolase (271 aa).

Asp12 serves as the catalytic Nucleophile. Asp12 and Ala14 together coordinate Mg(2+). Lys54 serves as the catalytic Schiff-base intermediate with substrate. Mg(2+) is bound at residue Asp188.

It belongs to the HAD-like hydrolase superfamily. PhnX family. Homodimer. Mg(2+) serves as cofactor.

The catalysed reaction is phosphonoacetaldehyde + H2O = acetaldehyde + phosphate + H(+). Its function is as follows. Involved in phosphonate degradation. This is Phosphonoacetaldehyde hydrolase from Vibrio parahaemolyticus serotype O3:K6 (strain RIMD 2210633).